The primary structure comprises 693 residues: Glycine--tRNA ligase beta subunit (693 aa).

Belongs to the class-II aminoacyl-tRNA synthetase family. In terms of assembly, tetramer of two alpha and two beta subunits.

The protein resides in the cytoplasm. The enzyme catalyses tRNA(Gly) + glycine + ATP = glycyl-tRNA(Gly) + AMP + diphosphate. The sequence is that of Glycine--tRNA ligase beta subunit from Vibrio vulnificus (strain YJ016).